A 474-amino-acid polypeptide reads, in one-letter code: ABHD16B (474 aa).

The AB hydrolase-1 domain occupies 175–293 (VICCEGNAGF…MPQSWKGLVV (119 aa)). Active-site charge relay system residues include S248, D323, and H423.

The protein belongs to the AB hydrolase superfamily. ABHD16 family.

It carries out the reaction a 1,2-diacyl-sn-glycero-3-phospho-L-serine + H2O = a 2-acyl-sn-glycero-3-phospho-L-serine + a fatty acid + H(+). It catalyses the reaction a 1-acylglycerol + H2O = glycerol + a fatty acid + H(+). The catalysed reaction is 1-(9Z-octadecenoyl)-glycerol + H2O = glycerol + (9Z)-octadecenoate + H(+). Hydrolyzes the sn-1 position of glycerophospholipids with high specificity towards phosphatidylserine (PS), PS-PLA1 enzyme. Also hydrolyzes the acyl chain of glycerolipids with a preference for the monoacylglycerol (MAG) 1-acylglycerol, MAG lipase. Plays a regulatory role in cellular lipid homeostasis by modulating genes involved in neutral lipid degradation and in phospholipid synthesis and composition. This Rattus norvegicus (Rat) protein is ABHD16B.